The following is a 419-amino-acid chain: UDP-N-acetylglucosamine 1-carboxyvinyltransferase (419 aa).

22–23 (KN) lines the phosphoenolpyruvate pocket. Arginine 91 is a binding site for UDP-N-acetyl-alpha-D-glucosamine. The Proton donor role is filled by cysteine 115. The residue at position 115 (cysteine 115) is a 2-(S-cysteinyl)pyruvic acid O-phosphothioketal. Residues 120–124 (RPVDL), 160–163 (KVSV), aspartate 305, and isoleucine 327 contribute to the UDP-N-acetyl-alpha-D-glucosamine site.

The protein belongs to the EPSP synthase family. MurA subfamily.

It localises to the cytoplasm. The catalysed reaction is phosphoenolpyruvate + UDP-N-acetyl-alpha-D-glucosamine = UDP-N-acetyl-3-O-(1-carboxyvinyl)-alpha-D-glucosamine + phosphate. It functions in the pathway cell wall biogenesis; peptidoglycan biosynthesis. In vitro inhibited by covalent binding of fosfomycin and the fungal product terreic acid in the presence of substrate UDP-N-acetylglucosamine, with an inactivation rate constant of 130 M(-1)sec(-1) for terreic acid. Cell wall formation. Adds enolpyruvyl to UDP-N-acetylglucosamine. Target for the antibiotic fosfomycin. This Enterobacter cloacae subsp. cloacae (strain ATCC 13047 / DSM 30054 / NBRC 13535 / NCTC 10005 / WDCM 00083 / NCDC 279-56) protein is UDP-N-acetylglucosamine 1-carboxyvinyltransferase.